A 151-amino-acid chain; its full sequence is tRNA-specific adenosine deaminase (151 aa).

Positions M1–S111 constitute a CMP/dCMP-type deaminase domain. Zn(2+) is bound at residue H52. E54 functions as the Proton donor in the catalytic mechanism. C82 and C85 together coordinate Zn(2+).

It belongs to the cytidine and deoxycytidylate deaminase family. Homodimer. Requires Zn(2+) as cofactor.

It carries out the reaction adenosine(34) in tRNA + H2O + H(+) = inosine(34) in tRNA + NH4(+). Functionally, catalyzes the deamination of adenosine to inosine at the wobble position 34 of tRNA(Arg2). This chain is tRNA-specific adenosine deaminase, found in Aquifex aeolicus (strain VF5).